Reading from the N-terminus, the 458-residue chain is NADH-quinone oxidoreductase subunit N (458 aa).

14 helical membrane passes run L2–L22, I30–S50, I71–G91, T93–I113, F118–F138, F153–F173, L196–L216, F235–I255, I261–A281, L290–N310, L319–F339, I361–F381, F397–V417, and L438–F458.

Belongs to the complex I subunit 2 family. In terms of assembly, NDH-1 is composed of 14 different subunits. Subunits NuoA, H, J, K, L, M, N constitute the membrane sector of the complex.

The protein localises to the cell inner membrane. It catalyses the reaction a quinone + NADH + 5 H(+)(in) = a quinol + NAD(+) + 4 H(+)(out). Functionally, NDH-1 shuttles electrons from NADH, via FMN and iron-sulfur (Fe-S) centers, to quinones in the respiratory chain. The immediate electron acceptor for the enzyme in this species is believed to be ubiquinone. Couples the redox reaction to proton translocation (for every two electrons transferred, four hydrogen ions are translocated across the cytoplasmic membrane), and thus conserves the redox energy in a proton gradient. In Rickettsia prowazekii (strain Madrid E), this protein is NADH-quinone oxidoreductase subunit N.